A 1357-amino-acid polypeptide reads, in one-letter code: DNA-directed RNA polymerase subunit beta (1357 aa).

This sequence belongs to the RNA polymerase beta chain family. As to quaternary structure, the RNAP catalytic core consists of 2 alpha, 1 beta, 1 beta' and 1 omega subunit. When a sigma factor is associated with the core the holoenzyme is formed, which can initiate transcription.

The enzyme catalyses RNA(n) + a ribonucleoside 5'-triphosphate = RNA(n+1) + diphosphate. Its function is as follows. DNA-dependent RNA polymerase catalyzes the transcription of DNA into RNA using the four ribonucleoside triphosphates as substrates. The chain is DNA-directed RNA polymerase subunit beta from Pseudomonas putida (strain W619).